Consider the following 819-residue polypeptide: Nonribosomal peptide synthetase 9 (819 aa).

An adenylation (A) domain region spans residues 202-591; it reads LQAPTQHAVR…GRKDTQAKIR (390 aa). Residues 722–798 form the Carrier domain; sequence QPRNERERLI…SLAEFLSSSS (77 aa). Residue S759 is modified to O-(pantetheine 4'-phosphoryl)serine.

The protein belongs to the NRP synthetase family.

The protein operates within secondary metabolite biosynthesis. Functionally, nonribosomal peptide synthetase; part of the Fg3_54/C64 gene cluster that mediates the biosynthesis of the octapeptide fusaoctaxin A, a virulence factor that is required for cell-to-cell invasiveness of plant host. The 2 nonribosomal peptide synthetases NRPS9 and NRPS5 form an assembly line which likely utilizes GABA as a starter unit (loaded on the unique module M1 of NRPS9) and sequentially incorporates seven extender units composed of the residues L-Ala, L-allo-Ile, L-Ser, L-Val, L-Ser, L-Leu and L-Leu, respectively. During the process, each of the residues that are tethered on modules M3-M7 of NRPS5 containing an E domain can undergo an epimerization reaction to produce a D-configuration before the transpeptidation reaction occurs. The elongation of the peptidyl chain might be terminated by module M8-mediated L-Leu incorporation, followed by R domain-catalyzed 4 electron reduction to release the resulting octapeptide from the assembly line as an alcohol. Fusaoctaxin A is cleaved by the cluster specific ABC transporter FGM5 to the pentapeptide fusapentaxin A and the tripeptide fusatrixin A. The other enzymes from the cluster, FGM1, FGM2, FGM3 and FGM9 seem not to be involved in the biosynthesis of fusaoctaxin A and their functions have still to be determined. The sequence is that of Nonribosomal peptide synthetase 9 from Gibberella zeae (strain ATCC MYA-4620 / CBS 123657 / FGSC 9075 / NRRL 31084 / PH-1) (Wheat head blight fungus).